The sequence spans 408 residues: MKILVLNAGSSSQKSCLYEIQSEPSSQPPSPLWEGKVDWTHEQGYAEIEVKTSTGACLQEKIAADSRPIVISHLLATLWQGDTQVIDQPNEIAVVGHRVVHGGAEYRKSVFITAEVKAAIARLASFAPVHNPANLEGIEAVETLFGNIPQVAVFDTAFHAHLPLAAAIYPGPYEWYEQGIRRYGFHGISHRYCAERAAQLLDRDLSSLRLITCHLGNGCSLAAIQNGISIETTMGFTPMEGLMMGSRSGSIDPGILIHLLRHQGYSADKLDQVLNKQSGLLGVSGISADLRRIDQAIAAGNDRAKLALEIYIHRLQSAIGACLPHLGGLDALIFTAGVGENSATVRAATCAGFEYLNWQIDQDQNQPSAQDRDIATPDSAVRILVIHTQEDWAIAQDCWQLIQTNSQS.

Asparagine 7 serves as a coordination point for Mg(2+). Lysine 14 serves as a coordination point for ATP. Residue arginine 98 participates in substrate binding. Aspartate 155 serves as the catalytic Proton donor/acceptor. ATP is bound by residues 214 to 218 (HLGNG), 289 to 291 (DLR), and 337 to 341 (GVGEN). Glutamate 390 serves as a coordination point for Mg(2+).

This sequence belongs to the acetokinase family. In terms of assembly, homodimer. Mg(2+) is required as a cofactor. Requires Mn(2+) as cofactor.

It localises to the cytoplasm. It carries out the reaction acetate + ATP = acetyl phosphate + ADP. It participates in metabolic intermediate biosynthesis; acetyl-CoA biosynthesis; acetyl-CoA from acetate: step 1/2. Functionally, catalyzes the formation of acetyl phosphate from acetate and ATP. Can also catalyze the reverse reaction. In Cyanothece sp. (strain PCC 7425 / ATCC 29141), this protein is Acetate kinase.